The following is a 161-amino-acid chain: V-type proton ATPase 16 kDa proteolipid subunit c (161 aa).

Residues 1-15 (MSYDLATAERAAYAP) are Lumenal-facing. A helical membrane pass occupies residues 16 to 36 (FFGYMGAASAQIFTVLGAAYG). Topologically, residues 37–58 (TAKSAVGISSMGVMRPELIMKS) are cytoplasmic. A helical membrane pass occupies residues 59 to 79 (VIPVIMAGIIGIYGLVVAMVL). The Lumenal segment spans residues 80 to 98 (RGKVTSASAGYTLDKGFAH). A helical transmembrane segment spans residues 99-119 (LAAGLTCGLCGLGAGYAIGIV). At 120–137 (GDAGVRGTAQQPRLFVGM) the chain is on the cytoplasmic side. The chain crosses the membrane as a helical span at residues 138–158 (ILILIFSEVLGLYGMIVALIL). Topologically, residues 159–161 (GTS) are lumenal.

Belongs to the V-ATPase proteolipid subunit family. V-ATPase is a heteromultimeric enzyme made up of two complexes: the ATP-hydrolytic V1 complex and the proton translocation V0 complex. The V1 complex consists of three catalytic AB heterodimers that form a heterohexamer, three peripheral stalks each consisting of EG heterodimers, one central rotor including subunits D and F, and the regulatory subunits C and H. The proton translocation complex V0 consists of the proton transport subunit a, a ring of proteolipid subunits c9c'', rotary subunit d, subunits e and f, and the accessory subunits vah-19/Ac45 and vah-20/PRR.

It localises to the membrane. Proton-conducting pore forming subunit of the V0 complex of vacuolar(H+)-ATPase (V-ATPase), a multisubunit enzyme composed of a peripheral complex (V1) that hydrolyzes ATP and a membrane integral complex (V0) that translocates protons. V-ATPase is responsible for acidifying and maintaining the pH of intracellular compartments and in some cell types, is targeted to the plasma membrane, where it is responsible for acidifying the extracellular environment. The polypeptide is V-type proton ATPase 16 kDa proteolipid subunit c (12) (Ascaris suum (Pig roundworm)).